The sequence spans 430 residues: Glutamate-1-semialdehyde 2,1-aminomutase (430 aa).

K265 is subject to N6-(pyridoxal phosphate)lysine.

The protein belongs to the class-III pyridoxal-phosphate-dependent aminotransferase family. HemL subfamily. In terms of assembly, homodimer. It depends on pyridoxal 5'-phosphate as a cofactor.

It localises to the cytoplasm. It carries out the reaction (S)-4-amino-5-oxopentanoate = 5-aminolevulinate. The protein operates within porphyrin-containing compound metabolism; protoporphyrin-IX biosynthesis; 5-aminolevulinate from L-glutamyl-tRNA(Glu): step 2/2. This chain is Glutamate-1-semialdehyde 2,1-aminomutase, found in Helicobacter pylori (strain Shi470).